Reading from the N-terminus, the 405-residue chain is Elongation factor Tu (405 aa).

Positions 10 to 213 (KEHVNVGTIG…AMDEYIPTPQ (204 aa)) constitute a tr-type G domain. The G1 stretch occupies residues 19–26 (GHVDHGKS). 19–26 (GHVDHGKS) lines the GTP pocket. Ser-26 provides a ligand contact to Mg(2+). Positions 64–68 (GITIN) are G2. The segment at 85–88 (DCPG) is G3. GTP contacts are provided by residues 85-89 (DCPGH) and 140-143 (NKCD). Residues 140-143 (NKCD) form a G4 region. A G5 region spans residues 178–180 (SAL).

The protein belongs to the TRAFAC class translation factor GTPase superfamily. Classic translation factor GTPase family. EF-Tu/EF-1A subfamily. As to quaternary structure, monomer.

It localises to the cytoplasm. The enzyme catalyses GTP + H2O = GDP + phosphate + H(+). In terms of biological role, GTP hydrolase that promotes the GTP-dependent binding of aminoacyl-tRNA to the A-site of ribosomes during protein biosynthesis. The sequence is that of Elongation factor Tu from Aquifex aeolicus (strain VF5).